Reading from the N-terminus, the 409-residue chain is Glucose-1-phosphate adenylyltransferase (409 aa).

Alpha-D-glucose 1-phosphate contacts are provided by residues glycine 168, 183–184, and serine 201; that span reads EK.

Belongs to the bacterial/plant glucose-1-phosphate adenylyltransferase family. In terms of assembly, homotetramer.

It catalyses the reaction alpha-D-glucose 1-phosphate + ATP + H(+) = ADP-alpha-D-glucose + diphosphate. Its pathway is glycan biosynthesis; glycogen biosynthesis. In terms of biological role, involved in the biosynthesis of ADP-glucose, a building block required for the elongation reactions to produce glycogen. Catalyzes the reaction between ATP and alpha-D-glucose 1-phosphate (G1P) to produce pyrophosphate and ADP-Glc. The chain is Glucose-1-phosphate adenylyltransferase from Corynebacterium glutamicum (strain R).